The primary structure comprises 201 residues: Translation machinery-associated protein 22 (201 aa).

In terms of domain architecture, SUI1 spans 94 to 165; sequence VTIKRIERNK…EARAYIEKLL (72 aa).

It belongs to the DENR family. In terms of assembly, interacts with the 40S ribosomal subunit.

The protein resides in the cytoplasm. This chain is Translation machinery-associated protein 22 (TMA22), found in Meyerozyma guilliermondii (strain ATCC 6260 / CBS 566 / DSM 6381 / JCM 1539 / NBRC 10279 / NRRL Y-324) (Yeast).